The following is a 398-amino-acid chain: Nocardicin C N-oxygenase (398 aa).

Residues 63–90 are disordered; sequence RARAAGREETPRVTPEAAPAGSMLSMDP. Residues H93, R97, R289, H345, and C347 each coordinate heme.

The protein belongs to the cytochrome P450 family. It depends on heme as a cofactor.

The enzyme catalyses nocardicin C + 4 reduced [2Fe-2S]-[ferredoxin] + 2 O2 + 2 H(+) = nocardicin A + 4 oxidized [2Fe-2S]-[ferredoxin] + 3 H2O. It participates in antibiotic biosynthesis. Its function is as follows. Involved in the biosynthesis of the beta-lactam antibiotic nocardicin A. Catalyzes the conversion of nocardicin C to nocardicin A. Cannot use nocardicin G. The protein is Nocardicin C N-oxygenase of Nocardia uniformis subsp. tsuyamanensis.